Consider the following 522-residue polypeptide: Colicin-E1 (522 aa).

Disordered stretches follow at residues 26 to 52 and 136 to 165; these read NGTPDGSGSGGGGGKGGSKSESSAAIH and EEKARKEAEAAEKAFQEAEQRRKEIEREKA. Over residues 30–42 the composition is skewed to gly residues; the sequence is DGSGSGGGGGKGG. 2 helical membrane passes run 471-487 and 494-510; these read AADAGVSYVVALLFSLL and IWGIAIVTGILCSYIDK.

This sequence belongs to the channel forming colicin family.

It localises to the cell membrane. Its function is as follows. This colicin is a channel-forming colicin. This class of transmembrane toxins depolarize the cytoplasmic membrane, leading to dissipation of cellular energy. In terms of biological role, colicins are polypeptide toxins produced by and active against E.coli and closely related bacteria. This is Colicin-E1 (cea) from Escherichia coli.